The chain runs to 204 residues: Guanylate kinase (204 aa).

The 180-residue stretch at 5–184 (GLLLVLSGPS…AVNHIKAIVD (180 aa)) folds into the Guanylate kinase-like domain. 12 to 19 (GPSGVGKG) contributes to the ATP binding site.

The protein belongs to the guanylate kinase family.

The protein localises to the cytoplasm. The catalysed reaction is GMP + ATP = GDP + ADP. Functionally, essential for recycling GMP and indirectly, cGMP. This is Guanylate kinase from Lactobacillus delbrueckii subsp. bulgaricus (strain ATCC 11842 / DSM 20081 / BCRC 10696 / JCM 1002 / NBRC 13953 / NCIMB 11778 / NCTC 12712 / WDCM 00102 / Lb 14).